The primary structure comprises 189 residues: UPF0301 protein PLES_04031 (189 aa).

It belongs to the UPF0301 (AlgH) family.

The polypeptide is UPF0301 protein PLES_04031 (Pseudomonas aeruginosa (strain LESB58)).